The sequence spans 388 residues: Succinate--CoA ligase [ADP-forming] subunit beta (388 aa).

The 236-residue stretch at 9 to 244 (KGVLSSFGVT…PDEYAAEELE (236 aa)) folds into the ATP-grasp domain. ATP-binding positions include K46, 53–55 (GRG), E99, V102, and E107. The Mg(2+) site is built by N199 and D213. Substrate contacts are provided by residues N264 and 320–322 (GIM).

Belongs to the succinate/malate CoA ligase beta subunit family. Heterotetramer of two alpha and two beta subunits. The cofactor is Mg(2+).

It carries out the reaction succinate + ATP + CoA = succinyl-CoA + ADP + phosphate. The catalysed reaction is GTP + succinate + CoA = succinyl-CoA + GDP + phosphate. The protein operates within carbohydrate metabolism; tricarboxylic acid cycle; succinate from succinyl-CoA (ligase route): step 1/1. In terms of biological role, succinyl-CoA synthetase functions in the citric acid cycle (TCA), coupling the hydrolysis of succinyl-CoA to the synthesis of either ATP or GTP and thus represents the only step of substrate-level phosphorylation in the TCA. The beta subunit provides nucleotide specificity of the enzyme and binds the substrate succinate, while the binding sites for coenzyme A and phosphate are found in the alpha subunit. The chain is Succinate--CoA ligase [ADP-forming] subunit beta from Anaplasma marginale (strain St. Maries).